The following is a 277-amino-acid chain: F41 fimbrial protein (277 aa).

The N-terminal stretch at 1–22 (MKKTLIALAVAASAAVSGSVMA) is a signal peptide.

Belongs to the fimbrial K88 protein family.

The protein localises to the fimbrium. Its function is as follows. Fimbriae (also called pili), polar filaments radiating from the surface of the bacterium to a length of 0.5-1.5 micrometers and numbering 100-300 per cell, enable bacteria to colonize the epithelium of specific host organs. This chain is F41 fimbrial protein (FimF41a), found in Escherichia coli.